Here is a 508-residue protein sequence, read N- to C-terminus: ATP synthase subunit alpha, mitochondrial (508 aa).

Residue 171 to 178 (GDRQTGKT) participates in ATP binding.

Belongs to the ATPase alpha/beta chains family. As to quaternary structure, F-type ATPases have 2 components, CF(1) - the catalytic core - and CF(0) - the membrane proton channel. CF(1) has five subunits: alpha(3), beta(3), gamma(1), delta(1), epsilon(1). CF(0) has three main subunits: a, b and c.

It is found in the mitochondrion. The protein resides in the mitochondrion inner membrane. In terms of biological role, mitochondrial membrane ATP synthase (F(1)F(0) ATP synthase or Complex V) produces ATP from ADP in the presence of a proton gradient across the membrane which is generated by electron transport complexes of the respiratory chain. F-type ATPases consist of two structural domains, F(1) - containing the extramembraneous catalytic core, and F(0) - containing the membrane proton channel, linked together by a central stalk and a peripheral stalk. During catalysis, ATP synthesis in the catalytic domain of F(1) is coupled via a rotary mechanism of the central stalk subunits to proton translocation. Subunits alpha and beta form the catalytic core in F(1). Rotation of the central stalk against the surrounding alpha(3)beta(3) subunits leads to hydrolysis of ATP in three separate catalytic sites on the beta subunits. Subunit alpha does not bear the catalytic high-affinity ATP-binding sites. This Phaseolus vulgaris (Kidney bean) protein is ATP synthase subunit alpha, mitochondrial (ATPA).